We begin with the raw amino-acid sequence, 326 residues long: AA10 family lytic polysaccharide monooxygenase C (326 aa).

The first 32 residues, Met1–Ala32, serve as a signal peptide directing secretion. Residues His33 and His118 each coordinate Cu(2+). A Chitin-binding type-4 domain is found at His33–Leu200. Residues Cys81 and Cys197 are joined by a disulfide bond. Asn206, Asn215, Asn266, and Asn303 each carry an N-linked (GlcNAc...) asparagine glycan. Positions Asn206 to Gly326 are disordered. Low complexity predominate over residues Ser207–Thr281.

It belongs to the polysaccharide monooxygenase AA10 family. Cu(2+) serves as cofactor.

The protein resides in the secreted. In terms of biological role, lytic polysaccharide monooxygenase (LPMO) that oxidatively cleaves alpha- and beta-chitin with C1 regioselectivity. Catalysis by LPMOs requires the reduction of the active-site copper from Cu(II) to Cu(I) by a reducing agent and H(2)O(2) or O(2) as a cosubstrate. Exhibits enzymatic activity on U.maydis fungal cell wall chitin and Boosts chitin hydrolysis by chitinase GH18A. This Mycosarcoma maydis (Corn smut fungus) protein is AA10 family lytic polysaccharide monooxygenase C.